Here is a 451-residue protein sequence, read N- to C-terminus: DNA double-strand break repair protein Mre11 (451 aa).

Residues Asp-8, His-10, Asp-49, and Asn-84 each coordinate Mn(2+). Residue His-85 is the Proton donor of the active site. Mn(2+)-binding residues include His-168, His-198, and His-200. Residues 374-451 (REDNPPDLGD…GRPSLDRWIG (78 aa)) form a disordered region. Acidic residues predominate over residues 396-416 (GSEESSEEPEESDGEEVGLEV).

This sequence belongs to the MRE11/RAD32 family. Homodimer. Forms a heterotetramer composed of two Mre11 subunits and two Rad50 subunits. The cofactor is Mn(2+).

Its activity is regulated as follows. Nuclease activity is regulated by Rad50. Part of the Rad50/Mre11 complex, which is involved in the early steps of DNA double-strand break (DSB) repair. The complex may facilitate opening of the processed DNA ends to aid in the recruitment of HerA and NurA. Mre11 binds to DSB ends and has both double-stranded 3'-5' exonuclease activity and single-stranded endonuclease activity. The polypeptide is DNA double-strand break repair protein Mre11 (Methanopyrus kandleri (strain AV19 / DSM 6324 / JCM 9639 / NBRC 100938)).